The following is a 138-amino-acid chain: Ribulose bisphosphate carboxylase small subunit (138 aa).

Belongs to the RuBisCO small chain family. In terms of assembly, heterohexadecamer of 8 large and 8 small subunits.

It is found in the plastid. The protein localises to the chloroplast. Its function is as follows. RuBisCO catalyzes two reactions: the carboxylation of D-ribulose 1,5-bisphosphate, the primary event in carbon dioxide fixation, as well as the oxidative fragmentation of the pentose substrate in the photorespiration process. Both reactions occur simultaneously and in competition at the same active site. Although the small subunit is not catalytic it is essential for maximal activity. Carbon dioxide and oxygen bind in the same pocket of the enzyme in a similar manner. The sequence is that of Ribulose bisphosphate carboxylase small subunit from Galdieria sulphuraria (Red alga).